Consider the following 269-residue polypeptide: tRNA pseudouridine synthase A (269 aa).

The Nucleophile role is filled by Asp51. Tyr109 provides a ligand contact to substrate.

Belongs to the tRNA pseudouridine synthase TruA family. In terms of assembly, homodimer.

The catalysed reaction is uridine(38/39/40) in tRNA = pseudouridine(38/39/40) in tRNA. Functionally, formation of pseudouridine at positions 38, 39 and 40 in the anticodon stem and loop of transfer RNAs. The chain is tRNA pseudouridine synthase A from Histophilus somni (strain 2336) (Haemophilus somnus).